A 28-amino-acid polypeptide reads, in one-letter code: Chaperonin GroEL (28 aa).

The protein belongs to the chaperonin (HSP60) family. Forms a cylinder of 14 subunits composed of two heptameric rings stacked back-to-back. Interacts with the co-chaperonin GroES.

It is found in the cytoplasm. The catalysed reaction is ATP + H2O + a folded polypeptide = ADP + phosphate + an unfolded polypeptide.. Its function is as follows. Together with its co-chaperonin GroES, plays an essential role in assisting protein folding. The GroEL-GroES system forms a nano-cage that allows encapsulation of the non-native substrate proteins and provides a physical environment optimized to promote and accelerate protein folding. The protein is Chaperonin GroEL of Mycolicibacterium smegmatis (Mycobacterium smegmatis).